We begin with the raw amino-acid sequence, 307 residues long: UDP-3-O-acyl-N-acetylglucosamine deacetylase (307 aa).

Residues His80, His239, and Asp243 each contribute to the Zn(2+) site. Residue His266 is the Proton donor of the active site.

It belongs to the LpxC family. Zn(2+) serves as cofactor.

The catalysed reaction is a UDP-3-O-[(3R)-3-hydroxyacyl]-N-acetyl-alpha-D-glucosamine + H2O = a UDP-3-O-[(3R)-3-hydroxyacyl]-alpha-D-glucosamine + acetate. It functions in the pathway glycolipid biosynthesis; lipid IV(A) biosynthesis; lipid IV(A) from (3R)-3-hydroxytetradecanoyl-[acyl-carrier-protein] and UDP-N-acetyl-alpha-D-glucosamine: step 2/6. Its function is as follows. Catalyzes the hydrolysis of UDP-3-O-myristoyl-N-acetylglucosamine to form UDP-3-O-myristoylglucosamine and acetate, the committed step in lipid A biosynthesis. The polypeptide is UDP-3-O-acyl-N-acetylglucosamine deacetylase (Neisseria gonorrhoeae (strain ATCC 700825 / FA 1090)).